Reading from the N-terminus, the 573-residue chain is Putative 15-O-acetyltransferase SAT12 (573 aa).

Residues 1 to 40 (MLDDDCSPTSSSEMSNASSREASITSRSSSTSGNNSLPED) are disordered. Over residues 7–36 (SPTSSSEMSNASSREASITSRSSSTSGNNS) the composition is skewed to low complexity.

This sequence belongs to the trichothecene O-acetyltransferase family.

Its pathway is mycotoxin biosynthesis. In terms of biological role, putative 15-O-acetyltransferase; part of the satratoxin SC2 cluster involved in the biosynthesis of satratoxins, trichothecene mycotoxins that are associated with human food poisonings. Satratoxins are suggested to be made by products of multiple gene clusters (SC1, SC2 and SC3) that encode 21 proteins in all, including polyketide synthases, acetyltransferases, and other enzymes expected to modify the trichothecene skeleton. SC1 encodes 10 proteins, SAT1 to SAT10. The largest are SAT8, which encodes a putative polyketide synthase (PKS) with a conventional non-reducing architecture, and SAT10, a putative protein containing four ankyrin repeats and thus may be involved in protein scaffolding. The putative short-chain reductase SAT3 may assist the PKS in some capacity. SAT6 contains a secretory lipase domain and acts probably as a trichothecene esterase. SAT5 encodes a putative acetyltransferase, and so, with SAT6, may affect endogenous protection from toxicity. The probable transcription factor SAT9 may regulate the expression of the SC1 cluster. SC2 encodes proteins SAT11 to SAT16, the largest of which encodes the putative reducing PKS SAT13. SAT11 is a cytochrome P450 monooxygenase, while SAT14 and SAT16 are probable acetyltransferases. The SC2 cluster may be regulated by the transcription factor SAT15. SC3 is a small cluster that encodes 5 proteins, SAT17 to SAT21. SAT21 is a putative MFS-type transporter which may have a role in exporting secondary metabolites. The four other proteins putatively encoded in SC3 include the taurine hydroxylase-like protein SAT17, the O-methyltransferase SAT18, the acetyltransferase SAT19, and the Cys6-type zinc finger SAT20, the latter being probably involved in regulation of SC3 expression. This is Putative 15-O-acetyltransferase SAT12 from Stachybotrys chartarum (strain CBS 109288 / IBT 7711) (Toxic black mold).